We begin with the raw amino-acid sequence, 873 residues long: Tyrosine-protein kinase receptor TYRO3 (873 aa).

A signal peptide spans 1–28; it reads MELRRSMALPRLLLLGLWAAALRDGAVA. Ig-like C2-type domains are found at residues 29–116 and 127–208; these read AGMK…KEES and PYFT…ATVQ. Residues 29 to 416 lie on the Extracellular side of the membrane; that stretch reads AGMKFTGSPI…QRQPPYGTSW (388 aa). N-linked (GlcNAc...) asparagine glycosylation occurs at asparagine 51. Disulfide bonds link cysteine 52-cysteine 105 and cysteine 148-cysteine 191. Asparagine 179, asparagine 184, asparagine 218, asparagine 228, asparagine 281, asparagine 353, and asparagine 367 each carry an N-linked (GlcNAc...) asparagine glycan. 2 consecutive Fibronectin type-III domains span residues 215–308 and 310–403; these read PPLN…TLEL and PSST…AQEV. The chain crosses the membrane as a helical span at residues 417–437; that stretch reads VPVALGILTALVTAVALALIL. At 438-873 the chain is on the cytoplasmic side; the sequence is LRKRRKETRF…ELETEGEKSC (436 aa). The Protein kinase domain maps to 505–776; sequence FTLGRMLGKG…GVLRSQLEMI (272 aa). Residues 511–519 and lysine 537 each bind ATP; that span reads LGKGEFGSV. Aspartate 642 acts as the Proton acceptor in catalysis. Tyrosine 673 is subject to Phosphotyrosine; by autocatalysis. The segment at 845-873 is disordered; the sequence is VEGERHPEGQEGENKSLLYELETEGEKSC. Positions 847–858 are enriched in basic and acidic residues; that stretch reads GERHPEGQEGEN.

This sequence belongs to the protein kinase superfamily. Tyr protein kinase family. AXL/UFO subfamily. In terms of processing, autophosphorylated on tyrosine residues. In terms of tissue distribution, detected in embryonic retina (at protein level). detected in brain, retina, kidney and in retinal Mueller glia-like cells.

It is found in the cell membrane. The catalysed reaction is L-tyrosyl-[protein] + ATP = O-phospho-L-tyrosyl-[protein] + ADP + H(+). In terms of biological role, receptor tyrosine kinase that transduces signals from the extracellular matrix into the cytoplasm by binding to several ligands. Regulates many physiological processes including cell survival, migration and differentiation. Ligand binding at the cell surface induces dimerization and autophosphorylation of TYRO3 on its intracellular domain that provides docking sites for downstream signaling molecules. Following activation by ligand, enhances PI3-kinase activity and activates the AKT survival pathway, including nuclear translocation of NF-kappa-B and up-regulation of transcription of NF-kappa-B-regulated genes. The chain is Tyrosine-protein kinase receptor TYRO3 (TYRO3) from Gallus gallus (Chicken).